A 683-amino-acid chain; its full sequence is DNA-directed RNA polymerase subunit beta' (683 aa).

Cys-69, Cys-71, Cys-87, and Cys-90 together coordinate Zn(2+). Residues Asp-492, Asp-494, and Asp-496 each coordinate Mg(2+).

Belongs to the RNA polymerase beta' chain family. RpoC1 subfamily. As to quaternary structure, in plastids the minimal PEP RNA polymerase catalytic core is composed of four subunits: alpha, beta, beta', and beta''. When a (nuclear-encoded) sigma factor is associated with the core the holoenzyme is formed, which can initiate transcription. Requires Mg(2+) as cofactor. Zn(2+) is required as a cofactor.

The protein resides in the plastid. The protein localises to the chloroplast. It carries out the reaction RNA(n) + a ribonucleoside 5'-triphosphate = RNA(n+1) + diphosphate. DNA-dependent RNA polymerase catalyzes the transcription of DNA into RNA using the four ribonucleoside triphosphates as substrates. This Coffea arabica (Arabian coffee) protein is DNA-directed RNA polymerase subunit beta'.